A 501-amino-acid chain; its full sequence is MDIRFQNLGPEHWKGEIMLAPVCQDEVLTEICPQMDKAAPWLAIAPALRDFKGKTGELALMHGHPELAVPRVLAVGLGPREKVDTAGIRKAVAAAVQLCRQKGFGSILLPEPALARLPGGRERLVEECVCASLLALYRFTALKKAEKDEPAEPQWLALGFDGQEVPDASHAAARKGENAAWAVMLARDLASTPPNLLYPEKLAERARELAREKGFACTVLDEHELEKESMGCLLAVGQGSGRPPRLVILEHAPEGHEQEKPLILVGKGITFDTGGISLKPAANMHQMKADMTGAATVLATLAALAQEDAPRRVIGLLACAENMPGGRAMRPGDVVRAANGDSVEIQNTDAEGRLALCDALAYAQKTWTPAALVDIATLTGACAVALGTQIAGLFSDDADLAERIRAAGGACGEEYWPLPLWKPYAEQLKSDVADICHMGPREGGAINAALFLQHFIQEGVRWAHLDIAGVDWVSKPTPLCPAGPSAFGARTLLELARGGVL.

Mn(2+) is bound by residues K267 and D272. K279 is an active-site residue. Mn(2+)-binding residues include D290, D349, and E351. R353 is a catalytic residue.

The protein belongs to the peptidase M17 family. Requires Mn(2+) as cofactor.

The protein resides in the cytoplasm. It carries out the reaction Release of an N-terminal amino acid, Xaa-|-Yaa-, in which Xaa is preferably Leu, but may be other amino acids including Pro although not Arg or Lys, and Yaa may be Pro. Amino acid amides and methyl esters are also readily hydrolyzed, but rates on arylamides are exceedingly low.. The catalysed reaction is Release of an N-terminal amino acid, preferentially leucine, but not glutamic or aspartic acids.. Functionally, presumably involved in the processing and regular turnover of intracellular proteins. Catalyzes the removal of unsubstituted N-terminal amino acids from various peptides. The polypeptide is Probable cytosol aminopeptidase (Desulfovibrio desulfuricans (strain ATCC 27774 / DSM 6949 / MB)).